The primary structure comprises 314 residues: MSRPRRRGRDIHGVLLLDKPQGMSSNDVLQKVKRIYNANRAGHTGALDPLATGMLPICLGEATKFSQYLLDSDKRYRVIARLGQRTDTSDADGQIVQERPVTFSAEQLAAALETFRGDIEQIPSMYSALKYQGKKLYEYARQGIEVPREARPITVYELLFIRHEGDELELEVHCSKGTYIRTIIDDLGEKLGCGAHVIFLRRLAVSKYPVDRMVTLEQLRELVEQAERQDIPAAQLLDPLLMPMDSPASDYPVVNLPLTSSVYFKNGNPVRTTGVPLEGLVRVTEGDDEKFIGMGEIDDEGRVAPRRLVVEYPA.

A substrate-binding site is contributed by His43. Asp48 (nucleophile) is an active-site residue. Tyr76, Tyr179, and Leu200 together coordinate substrate.

Belongs to the pseudouridine synthase TruB family. Type 1 subfamily.

The enzyme catalyses uridine(55) in tRNA = pseudouridine(55) in tRNA. In terms of biological role, responsible for synthesis of pseudouridine from uracil-55 in the psi GC loop of transfer RNAs. In Citrobacter koseri (strain ATCC BAA-895 / CDC 4225-83 / SGSC4696), this protein is tRNA pseudouridine synthase B.